A 383-amino-acid polypeptide reads, in one-letter code: Putative protein FAM157A (383 aa).

Disordered regions lie at residues 1 to 21 (MGPLFTTIPGAHSGPMRPLPK) and 177 to 254 (ATAR…PLGR).

Belongs to the FAM157 family.

The protein is Putative protein FAM157A (FAM157A) of Homo sapiens (Human).